The following is a 269-amino-acid chain: 3-methyl-2-oxobutanoate hydroxymethyltransferase (269 aa).

Mg(2+) contacts are provided by Asp-43 and Asp-82. Residues 43–44, Asp-82, and Lys-110 each bind 3-methyl-2-oxobutanoate; that span reads DS. A Mg(2+)-binding site is contributed by Glu-112. Glu-179 functions as the Proton acceptor in the catalytic mechanism.

Belongs to the PanB family. As to quaternary structure, homodecamer; pentamer of dimers. It depends on Mg(2+) as a cofactor.

Its subcellular location is the cytoplasm. It carries out the reaction 3-methyl-2-oxobutanoate + (6R)-5,10-methylene-5,6,7,8-tetrahydrofolate + H2O = 2-dehydropantoate + (6S)-5,6,7,8-tetrahydrofolate. It participates in cofactor biosynthesis; (R)-pantothenate biosynthesis; (R)-pantoate from 3-methyl-2-oxobutanoate: step 1/2. Its function is as follows. Catalyzes the reversible reaction in which hydroxymethyl group from 5,10-methylenetetrahydrofolate is transferred onto alpha-ketoisovalerate to form ketopantoate. The chain is 3-methyl-2-oxobutanoate hydroxymethyltransferase from Acinetobacter baumannii (strain SDF).